Consider the following 63-residue polypeptide: Large ribosomal subunit protein uL29 (63 aa).

Belongs to the universal ribosomal protein uL29 family.

The protein is Large ribosomal subunit protein uL29 of Mannheimia succiniciproducens (strain KCTC 0769BP / MBEL55E).